Reading from the N-terminus, the 633-residue chain is tRNA uridine 5-carboxymethylaminomethyl modification enzyme MnmG (633 aa).

FAD-binding positions include 15-20, I127, and S182; that span reads GAGHAG. Residue 276 to 290 coordinates NAD(+); the sequence is GPRYCPSIEDKIVRF. Q373 contacts FAD.

This sequence belongs to the MnmG family. As to quaternary structure, homodimer. Heterotetramer of two MnmE and two MnmG subunits. Requires FAD as cofactor.

The protein resides in the cytoplasm. In terms of biological role, NAD-binding protein involved in the addition of a carboxymethylaminomethyl (cmnm) group at the wobble position (U34) of certain tRNAs, forming tRNA-cmnm(5)s(2)U34. This Streptococcus agalactiae serotype III (strain NEM316) protein is tRNA uridine 5-carboxymethylaminomethyl modification enzyme MnmG.